A 709-amino-acid chain; its full sequence is RxLR effector protein PITG_15110 (709 aa).

An N-terminal signal peptide occupies residues 1–18; sequence MHAYSAAVLMGLLMVAEG. Positions 51–66 match the RxLR-dEER motif; that stretch reads RLLREPETTEASNEDR.

Belongs to the RxLR effector family.

It localises to the secreted. Its subcellular location is the host cytoplasm. The protein localises to the host cytoskeleton. Effector that enhances P.infestans colonization of Nicotiana benthamiana leaves. The protein is RxLR effector protein PITG_15110 of Phytophthora infestans (strain T30-4) (Potato late blight agent).